The sequence spans 200 residues: Recombination protein RecR (200 aa).

The segment at 59–74 (CEVCGNVCESSPCTIC) adopts a C4-type zinc-finger fold. Positions 82–177 (GTICVVEEPK…KVTRLASGLP (96 aa)) constitute a Toprim domain.

Belongs to the RecR family.

May play a role in DNA repair. It seems to be involved in an RecBC-independent recombinational process of DNA repair. It may act with RecF and RecO. The sequence is that of Recombination protein RecR from Bifidobacterium animalis subsp. lactis (strain AD011).